A 1483-amino-acid polypeptide reads, in one-letter code: Neuropathy target esterase sws (1483 aa).

The Lumenal portion of the chain corresponds to 1–34 (MDVLELLRASANGCYNTLFSDAWFQYVSKQIATT). The chain crosses the membrane as a helical span at residues 35–55 (MYWYGALLVIGVLFIAWFLYF). Residues 56-1483 (KRLARLRLRD…ENLTKTDTKN (1428 aa)) are Cytoplasmic-facing. 174-301 (IFGHFEKPIF…IRVIQVIMIR (128 aa)) serves as a coordination point for a nucleoside 3',5'-cyclic phosphate. Disordered regions lie at residues 348 to 380 (ASRP…PNAN) and 404 to 440 (SSAV…GTSI). Polar residues predominate over residues 413 to 440 (GTRRSSTTYGPSGESPNGNANTAPGTSI). Serine 418 and serine 424 each carry phosphoserine. Residues 456–585 (ELGL…VVRR) and 574–701 (IVLD…LSHR) contribute to the a nucleoside 3',5'-cyclic phosphate site. One can recognise a PNPLA domain in the interval 927-1093 (LVLGGGGARG…VNNLPGHLWR (167 aa)). Positions 931 to 936 (GGGARG) match the GXGXXG motif. The short motif at 958 to 962 (GVSIG) is the GXSXG element. Serine 960 (nucleophile) is an active-site residue. Residue aspartate 1080 is the Proton acceptor of the active site. The short motif at 1080 to 1082 (DGG) is the DGA/G element. Serine 1174 is modified (phosphoserine). The tract at residues 1349–1483 (DKATQSTPPT…ENLTKTDTKN (135 aa)) is disordered. The span at 1351 to 1373 (ATQSTPPTPNKQHALSPTSSQTN) shows a compositional bias: polar residues. Residues 1382 to 1396 (KPKEKQPSYDKLDRE) are compositionally biased toward basic and acidic residues. The span at 1410–1419 (ERSSMQQRDS) shows a compositional bias: low complexity. Over residues 1445 to 1458 (LNKPEQQPEQKPVP) the composition is skewed to basic and acidic residues. Positions 1465–1474 (QKQQDQQQQE) are enriched in low complexity.

This sequence belongs to the NTE family. In terms of assembly, interacts with Pka-C3; interaction inhibits the catalytic function of Pka-C3 and the esterase activity of sws.

Its subcellular location is the endoplasmic reticulum membrane. The enzyme catalyses a 1-acyl-sn-glycero-3-phosphocholine + H2O = sn-glycerol 3-phosphocholine + a fatty acid + H(+). Phospholipase B that deacylates intracellular phosphatidylcholine (PtdCho), generating glycerophosphocholine (GroPtdCho). This deacylation occurs at both sn-2 and sn-1 positions of PtdCho. Its specific chemical modification by certain organophosphorus (OP) compounds leads to distal axonopathy. Plays a role in the signaling mechanism between neurons and glia that regulates glia wrapping during development of the adult brain. Essential for membrane lipid homeostasis and cell survival in both neurons and glia of the adult brain. The chain is Neuropathy target esterase sws from Drosophila virilis (Fruit fly).